We begin with the raw amino-acid sequence, 705 residues long: MARDYPLELCRNFGIMAHIDAGKTTTTERILYYTGKSHKIGEVHDGAATMDWMEQEQERGITITSAATTTFWERTEDGKTPLTPKHRFNIIDTPGHVDFTIEVERSLAVLDGAVCLLDANAGVEPQTETVWRQADRYKVPRIVFVNKMDKIGADFFNCVKMIKDRTGATPAPIALPIGAEDKLEGIIDLVTMQEWVYQGEDLGASWIIKDVRDELKAEAEEWRGKLIELAVEQDDEAMEAYLEGNEPDVPTLRKLIRKGCLAMAFVPVTAGSAFKNKGVQPVLNSVIDYLPSPLDVPAYMGFAPGDETETRNIARSADDSQPFAALAFKIMNDPFVGSLTFTRLYSGVLKKGDQMVNSTKGKRERVGRMMMMHAINREEIDEAFAGDIIALAGLKETTTGDTLCDPANQVVLETMTFPEPVIEIAVEPKTKADQEKMGLALARLAAEDPSFRVETDFESGQTIMKGMGELHLDILVDRMKREFKVEANIGAPQVAYRETISREAEIDYTHKKQTGGTGQFARVKLVITPTEPGEGYSFESKIVGGAVPKEYIPGVEKGIKSVMDSGPLAGFPVIDFRVALIDGAFHDVDSSVLAFEIASRAAMREGLKKAGAKLLEPIMKVEVVTPEEYTGGIIGDLTSRRGMVQGQDTRGNANVINAFVPLANMFGYINTLRSMSSGRAVFTMHFDHYDAVPQNISDEIQKKYA.

The 287-residue stretch at 8 to 294 folds into the tr-type G domain; it reads ELCRNFGIMA…SVIDYLPSPL (287 aa). GTP-binding positions include 17–24, 92–96, and 146–149; these read AHIDAGKT, DTPGH, and NKMD.

The protein belongs to the TRAFAC class translation factor GTPase superfamily. Classic translation factor GTPase family. EF-G/EF-2 subfamily.

It localises to the cytoplasm. Functionally, catalyzes the GTP-dependent ribosomal translocation step during translation elongation. During this step, the ribosome changes from the pre-translocational (PRE) to the post-translocational (POST) state as the newly formed A-site-bound peptidyl-tRNA and P-site-bound deacylated tRNA move to the P and E sites, respectively. Catalyzes the coordinated movement of the two tRNA molecules, the mRNA and conformational changes in the ribosome. The polypeptide is Elongation factor G (Cereibacter sphaeroides (strain ATCC 17023 / DSM 158 / JCM 6121 / CCUG 31486 / LMG 2827 / NBRC 12203 / NCIMB 8253 / ATH 2.4.1.) (Rhodobacter sphaeroides)).